We begin with the raw amino-acid sequence, 126 residues long: 3-aminobutyryl-CoA ammonia lyase (126 aa).

The protein belongs to the KAL family. As to quaternary structure, homohexamer.

It carries out the reaction (3S)-3-aminobutanoyl-CoA = (2E)-butenoyl-CoA + NH4(+). It participates in amino-acid degradation; L-lysine degradation via acetate pathway. Its function is as follows. Involved in the anaerobic fermentation of lysine. Catalyzes the deamination of L-3-aminobutyryl-CoA to produce crotonoyl-CoA. The sequence is that of 3-aminobutyryl-CoA ammonia lyase from Acetoanaerobium sticklandii (strain ATCC 12662 / DSM 519 / JCM 1433 / CCUG 9281 / NCIMB 10654 / HF) (Clostridium sticklandii).